A 369-amino-acid chain; its full sequence is C2 calcium-dependent domain-containing protein 4A (369 aa).

Disordered regions lie at residues 151–176 (PRAPGPATPAAPGCPRPPQDALARRP) and 197–240 (RSRR…PFPE). The span at 153–168 (APGPATPAAPGCPRPP) shows a compositional bias: pro residues. Low complexity predominate over residues 220–237 (SQSPARAPSTSPPSSRVP). Positions 253 to 369 (AGDALRLAAE…ELSLGALLLL (117 aa)) constitute a C2 domain.

It belongs to the C2CD4 family. As to expression, specifically expressed in endothelial cells.

Its subcellular location is the nucleus. Its function is as follows. May be involved in inflammatory process. May regulate cell architecture and adhesion. This Homo sapiens (Human) protein is C2 calcium-dependent domain-containing protein 4A (C2CD4A).